The following is an 89-amino-acid chain: Omega-theraphotoxin-Ba1c (89 aa).

An N-terminal signal peptide occupies residues 1–23 (MRSLTLAAVLACSLLLVFHTSAA). Positions 24-50 (EEHEAQEGYLMNPGDTDTALATVDDER) are excised as a propeptide. Cystine bridges form between Cys-54–Cys-75, Cys-58–Cys-81, and Cys-67–Cys-86.

Belongs to the neurotoxin 12 (Hwtx-2) family. 06 (TXP1) subfamily. As to expression, expressed by the venom gland.

The protein resides in the secreted. Its function is as follows. Inhibits voltage-gated calcium channels (Cav) in rat cerebellar granule cells. Has insecticidal activity. This is Omega-theraphotoxin-Ba1c from Brachypelma albiceps (Mexican golden redrump tarantula).